A 1090-amino-acid chain; its full sequence is Neurofilament heavy polypeptide (1090 aa).

Residues 2–98 (MSFGSADALL…AVAARSEKEQ (97 aa)) form a head region. Phosphoserine occurs at positions 74 and 122. The IF rod domain maps to 95–411 (EKEQLQALND…KLLEGEECRI (317 aa)). The interval 99–130 (LQALNDRFAGYIDKVRQLEAHNRSLEGEAAAL) is coil 1A. The interval 131–143 (RQQQAGRAAMGEL) is linker 1. Residues 144 to 242 (YEREVREMRG…QEEVGELLGQ (99 aa)) are coil 1B. The segment at 243-264 (IQGCGAAQAQAQAEARDALKCD) is linker 12. Residues 265–286 (VTSALREIRAQLEGHAVQSTLQ) are coil 2A. The linker 2 stretch occupies residues 287–290 (SEEW). Residues 291 to 411 (FRVRLDRLSE…KLLEGEECRI (121 aa)) are coil 2B. Phosphoserine is present on residues Ser-345, Ser-416, and Ser-419. Residues 412–1090 (GFGPSPFSLT…TEDKATKGEK (679 aa)) are tail. Positions 456–1090 (EGQTEEIRVT…TEDKATKGEK (635 aa)) are disordered. Over residues 468 to 495 (VTEEEDKEAQGQEGEEAEEGEEKEEEEG) the composition is skewed to acidic residues. The span at 496-506 (AAATSPPAEEA) shows a compositional bias: low complexity. Ser-508, Ser-523, Ser-529, Ser-535, Ser-541, Ser-547, Ser-553, Ser-559, Ser-565, Ser-571, Ser-577, Ser-583, Ser-589, Ser-595, Ser-601, Ser-607, Ser-613, Ser-619, Ser-625, Ser-631, Ser-637, Ser-643, Ser-649, Ser-655, Ser-661, Ser-667, Ser-673, Ser-679, Ser-685, Ser-691, Ser-697, Ser-703, Ser-709, Ser-715, Ser-721, Ser-727, Ser-733, Ser-739, Ser-745, Ser-751, Ser-757, Ser-763, and Ser-769 each carry phosphoserine. The span at 508-579 (SPEKETKSRV…KSPAEAKSPA (72 aa)) shows a compositional bias: basic and acidic residues. 42 tandem repeats follow at residues 522-527 (KSPGEA), 528-533 (KSPGEA), 534-539 (KSPAEA), 540-545 (KSPGEA), 546-551 (KSPGEA), 552-557 (KSPGEA), 558-563 (KSPAEP), 564-569 (KSPAEP), 570-575 (KSPAEA), 576-581 (KSPAEP), 582-587 (KSPATV), 588-593 (KSPGEA), 594-599 (KSPSEA), 600-605 (KSPAEA), 606-611 (KSPAEA), 612-617 (KSPAEA), 618-623 (KSPAEA), 624-629 (KSPAEA), 630-635 (KSPAEA), 636-641 (KSPATV), 642-647 (KSPGEA), 648-653 (KSPSEA), 654-659 (KSPAEA), 660-665 (KSPAEA), 666-671 (KSPAEA), 672-677 (KSPAEV), 678-683 (KSPGEA), 684-689 (KSPAEP), 690-695 (KSPAEA), 696-701 (KSPAEV), 702-707 (KSPAEA), 708-713 (KSPAEV), 714-719 (KSPGEA), 720-725 (KSPAAV), 726-731 (KSPAEA), 732-737 (KSPAAV), 738-743 (KSPGEA), 744-749 (KSPGEA), 750-755 (KSPAEA), 756-761 (KSPAEA), 762-767 (KSPIEV), and 768-773 (KSPEKA). Positions 522–892 (KSPGEAKSPG…KEEVKSPVKE (371 aa)) are 52 X 6 AA approximate tandem repeats of K-S-P-[AGISV]-[EATK]-[APVQ]. The segment covering 595-633 (SPSEAKSPAEAKSPAEAKSPAEAKSPAEAKSPAEAKSPA) has biased composition (basic and acidic residues). Basic and acidic residues predominate over residues 649 to 717 (SPSEAKSPAE…KSPAEVKSPG (69 aa)). Over residues 745 to 781 (SPGEAKSPAEAKSPAEAKSPIEVKSPEKAKTPVKEGA) the composition is skewed to basic and acidic residues. Residues 774-779 (KTPVKE) form a 43; approximate repeat. 6 consecutive repeat copies span residues 782-787 (KSPAEA), 788-793 (KSPEKA), 794-799 (KSPVKE), 808-813 (KSPEKA), 814-819 (KSPVKE), and 833-838 (KSPEAQ). A phosphoserine mark is found at Ser-783, Ser-789, Ser-795, Ser-809, Ser-815, and Ser-834. Residues 788–834 (KSPEKAKSPVKEDIKPPAEAKSPEKAKSPVKEGAKPPEKAKPLDVKS) show a composition bias toward basic and acidic residues. Position 839 is a phosphothreonine (Thr-839). 2 stretches are compositionally biased toward basic and acidic residues: residues 843 to 964 (EEAK…KAVA) and 974 to 1090 (GVKE…KGEK). Repeat copies occupy residues 858–863 (KSPAKE), 866–871 (KSPEKE), and 887–892 (KSPVKE). Phosphoserine is present on residues Ser-859, Ser-867, Ser-888, and Ser-947.

Belongs to the intermediate filament family. As to quaternary structure, forms heterodimers with NEFL; which can further hetero-oligomerize (in vitro). Forms heterodimers with INA (in vitro). In terms of processing, there are a number of repeats of the tripeptide K-S-P, NFH is phosphorylated on a number of the serines in this motif. It is thought that phosphorylation of NFH results in the formation of interfilament cross bridges that are important in the maintenance of axonal caliber. Post-translationally, phosphorylation seems to play a major role in the functioning of the larger neurofilament polypeptides (NF-M and NF-H), the levels of phosphorylation being altered developmentally and coincidentally with a change in the neurofilament function. Phosphorylated in the head and rod regions by the PKC kinase PKN1, leading to the inhibition of polymerization. As to expression, expressed in the sciatic nerve (at protein level).

It localises to the cytoplasm. The protein resides in the cytoskeleton. It is found in the cell projection. Its subcellular location is the axon. Its function is as follows. Neurofilaments usually contain three intermediate filament proteins: NEFL, NEFM, and NEFH which are involved in the maintenance of neuronal caliber. NEFH has an important function in mature axons that is not subserved by the two smaller NF proteins. May additionally cooperate with the neuronal intermediate filament proteins PRPH and INA to form neuronal filamentous networks. This chain is Neurofilament heavy polypeptide (Nefh), found in Mus musculus (Mouse).